The primary structure comprises 504 residues: Glycerol kinase (504 aa).

Thr12 provides a ligand contact to ADP. ATP is bound by residues Thr12, Thr13, and Ser14. Thr12 contributes to the sn-glycerol 3-phosphate binding site. ADP is bound at residue Arg16. Residues Arg82, Glu83, Tyr134, and Asp246 each coordinate sn-glycerol 3-phosphate. Residues Arg82, Glu83, Tyr134, Asp246, and Gln247 each contribute to the glycerol site. ADP is bound by residues Thr268 and Gly312. Residues Thr268, Gly312, Gln316, and Gly413 each contribute to the ATP site. The ADP site is built by Gly413 and Asn417.

Belongs to the FGGY kinase family.

It carries out the reaction glycerol + ATP = sn-glycerol 3-phosphate + ADP + H(+). Its pathway is polyol metabolism; glycerol degradation via glycerol kinase pathway; sn-glycerol 3-phosphate from glycerol: step 1/1. Its activity is regulated as follows. Inhibited by fructose 1,6-bisphosphate (FBP). In terms of biological role, key enzyme in the regulation of glycerol uptake and metabolism. Catalyzes the phosphorylation of glycerol to yield sn-glycerol 3-phosphate. The sequence is that of Glycerol kinase from Renibacterium salmoninarum (strain ATCC 33209 / DSM 20767 / JCM 11484 / NBRC 15589 / NCIMB 2235).